Consider the following 71-residue polypeptide: DNA-directed RNA polymerase subunit omega (71 aa).

It belongs to the RNA polymerase subunit omega family. In terms of assembly, the RNAP catalytic core consists of 2 alpha, 1 beta, 1 beta' and 1 omega subunit. When a sigma factor is associated with the core the holoenzyme is formed, which can initiate transcription.

It catalyses the reaction RNA(n) + a ribonucleoside 5'-triphosphate = RNA(n+1) + diphosphate. Its function is as follows. Promotes RNA polymerase assembly. Latches the N- and C-terminal regions of the beta' subunit thereby facilitating its interaction with the beta and alpha subunits. This is DNA-directed RNA polymerase subunit omega from Azoarcus sp. (strain BH72).